Reading from the N-terminus, the 1209-residue chain is ATP-dependent helicase/nuclease subunit A (1209 aa).

The UvrD-like helicase ATP-binding domain occupies 9 to 482 (SQWTDEQWQA…IDLAKNFRSR (474 aa)). 30–37 (AAAGSGKT) is an ATP binding site. A UvrD-like helicase C-terminal domain is found at 510–798 (AALRFGAQDY…RMMTIHKSKG (289 aa)).

It belongs to the helicase family. AddA subfamily. As to quaternary structure, heterodimer of AddA and AddB/RexB. Mg(2+) serves as cofactor.

It catalyses the reaction Couples ATP hydrolysis with the unwinding of duplex DNA by translocating in the 3'-5' direction.. The enzyme catalyses ATP + H2O = ADP + phosphate + H(+). Functionally, the heterodimer acts as both an ATP-dependent DNA helicase and an ATP-dependent, dual-direction single-stranded exonuclease. Recognizes the chi site generating a DNA molecule suitable for the initiation of homologous recombination. The AddA nuclease domain is required for chi fragment generation; this subunit has the helicase and 3' -&gt; 5' nuclease activities. This chain is ATP-dependent helicase/nuclease subunit A, found in Anoxybacillus flavithermus (strain DSM 21510 / WK1).